The chain runs to 21 residues: Dahlein-5.4 (21 aa).

Expressed by the skin dorsal glands.

Its subcellular location is the secreted. Its function is as follows. Has no antimicrobial activity. Strongly inhibits the formation of NO by neuronal nitric oxide synthase at micromolar concentrations. This chain is Dahlein-5.4, found in Ranoidea dahlii (Dahl's aquatic frog).